The following is a 146-amino-acid chain: Putative pre-16S rRNA nuclease (146 aa).

This sequence belongs to the YqgF nuclease family.

The protein resides in the cytoplasm. Its function is as follows. Could be a nuclease involved in processing of the 5'-end of pre-16S rRNA. The sequence is that of Putative pre-16S rRNA nuclease from Pseudomonas savastanoi pv. phaseolicola (strain 1448A / Race 6) (Pseudomonas syringae pv. phaseolicola (strain 1448A / Race 6)).